The sequence spans 210 residues: Large ribosomal subunit protein uL4 (210 aa).

Residues 49-76 form a disordered region; that stretch reads HCTKTRSEVSGGGKKPWRQKHTGRARHG. Residues 63-76 show a composition bias toward basic residues; it reads KPWRQKHTGRARHG.

This sequence belongs to the universal ribosomal protein uL4 family. In terms of assembly, part of the 50S ribosomal subunit.

Its function is as follows. One of the primary rRNA binding proteins, this protein initially binds near the 5'-end of the 23S rRNA. It is important during the early stages of 50S assembly. It makes multiple contacts with different domains of the 23S rRNA in the assembled 50S subunit and ribosome. Functionally, forms part of the polypeptide exit tunnel. The chain is Large ribosomal subunit protein uL4 from Thermodesulfovibrio yellowstonii (strain ATCC 51303 / DSM 11347 / YP87).